The following is a 423-amino-acid chain: Glutamate-1-semialdehyde 2,1-aminomutase (423 aa).

Residue K262 is modified to N6-(pyridoxal phosphate)lysine.

This sequence belongs to the class-III pyridoxal-phosphate-dependent aminotransferase family. HemL subfamily. As to quaternary structure, homodimer. Pyridoxal 5'-phosphate is required as a cofactor.

Its subcellular location is the cytoplasm. It carries out the reaction (S)-4-amino-5-oxopentanoate = 5-aminolevulinate. Its pathway is porphyrin-containing compound metabolism; protoporphyrin-IX biosynthesis; 5-aminolevulinate from L-glutamyl-tRNA(Glu): step 2/2. The sequence is that of Glutamate-1-semialdehyde 2,1-aminomutase from Saccharophagus degradans (strain 2-40 / ATCC 43961 / DSM 17024).